Here is a 408-residue protein sequence, read N- to C-terminus: GTPase HflX (408 aa).

The Hflx-type G domain occupies 198 to 361 (PRVSLVGYTN…LIVREMERHY (164 aa)). GTP-binding positions include 204-211 (GYTNAGKS), 229-233 (FVTLD), 251-254 (DTVG), 317-320 (NKAD), and 339-341 (SAK). 2 residues coordinate Mg(2+): serine 211 and threonine 231.

The protein belongs to the TRAFAC class OBG-HflX-like GTPase superfamily. HflX GTPase family. As to quaternary structure, monomer. Associates with the 50S ribosomal subunit. Mg(2+) serves as cofactor.

Its subcellular location is the cytoplasm. Functionally, GTPase that associates with the 50S ribosomal subunit and may have a role during protein synthesis or ribosome biogenesis. The chain is GTPase HflX from Spirochaeta thermophila (strain ATCC 49972 / DSM 6192 / RI 19.B1).